The primary structure comprises 407 residues: Putative F-box protein At5g60560 (407 aa).

The F-box domain occupies 2–49 (TMMSDLSEDLVEEILCRVSITSLGAVRSTCKGWYVLSKTRVLCKAETK).

The polypeptide is Putative F-box protein At5g60560 (Arabidopsis thaliana (Mouse-ear cress)).